Consider the following 218-residue polypeptide: UPF0598 protein C8orf82 homolog (218 aa).

It belongs to the UPF0598 family.

The chain is UPF0598 protein C8orf82 homolog from Mus musculus (Mouse).